The chain runs to 1059 residues: WD repeat-containing protein on Y chromosome (1059 aa).

WD repeat units follow at residues 121 to 161 (DFCP…ALTA), 170 to 209 (RSKT…FTLK), 214 to 256 (RLPQ…KVTT), 344 to 383 (CVPR…KPSV), 387 to 426 (GHTS…LLQT), 476 to 515 (SHTK…KMTI), 528 to 567 (LEPV…CMRT), 616 to 658 (QHSD…RRYD), 714 to 759 (MRQL…GFKG), 766 to 805 (MAGD…IPNE), and 849 to 888 (AHRA…IGLL).

The chain is WD repeat-containing protein on Y chromosome from Anopheles gambiae (African malaria mosquito).